A 229-amino-acid chain; its full sequence is MAKKKAFTPLFYLASIVFLPWWISFSVNKCLESWVTNWWNTGQSEIFLNNIQEKSLLEKFIELEELLFLDEMVKEYSETHLEEFGIGIHKETIQLIKIQNENRIHTILHFSTNIICFIILSGYSILGNENLAILNSWAQEFLYNLSDTVKAFSILLLTDLCIGFHSPHGWELMIGSIYKDFGFVHSDQIISGLVSTFPVILDTIFKYWIFRYLNRLSPSLVVIYHSMND.

3 helical membrane-spanning segments follow: residues 7–27, 107–127, and 189–209; these read FTPL…SFSV, ILHF…SILG, and IISG…KYWI.

It belongs to the CemA family.

The protein localises to the plastid. It is found in the chloroplast inner membrane. The enzyme catalyses K(+)(in) + H(+)(out) = K(+)(out) + H(+)(in). In terms of biological role, contributes to K(+)/H(+) antiport activity by supporting proton efflux to control proton extrusion and homeostasis in chloroplasts in a light-dependent manner to modulate photosynthesis. Prevents excessive induction of non-photochemical quenching (NPQ) under continuous-light conditions. Indirectly promotes efficient inorganic carbon uptake into chloroplasts. The protein is Potassium/proton antiporter CemA of Nicotiana tomentosiformis (Tobacco).